A 1176-amino-acid polypeptide reads, in one-letter code: Pesticidal crystal protein Cry1Aa (1176 aa).

Belongs to the delta endotoxin family.

Promotes colloidosmotic lysis by binding to the midgut epithelial cells of many lepidopteran larvae. The sequence is that of Pesticidal crystal protein Cry1Aa (cry1Aa) from Bacillus thuringiensis subsp. entomocidus.